The primary structure comprises 202 residues: Small ribosomal subunit protein uS4c (202 aa).

The 59-residue stretch at 90–148 folds into the S4 RNA-binding domain; that stretch reads MRLDNVIFRLGMSSTIPGARQLVNHRHIMINDEMVDTPGYNCKPRDIITLKNISESRSG.

The protein belongs to the universal ribosomal protein uS4 family. As to quaternary structure, part of the 30S ribosomal subunit. Contacts protein S5. The interaction surface between S4 and S5 is involved in control of translational fidelity.

Its subcellular location is the plastid. The protein resides in the chloroplast. Functionally, one of the primary rRNA binding proteins, it binds directly to 16S rRNA where it nucleates assembly of the body of the 30S subunit. With S5 and S12 plays an important role in translational accuracy. The protein is Small ribosomal subunit protein uS4c (rps4) of Haplomitrium hookeri (Hooker's flapwort).